Consider the following 127-residue polypeptide: Large ribosomal subunit protein bL12 (127 aa).

It belongs to the bacterial ribosomal protein bL12 family. Homodimer. Part of the ribosomal stalk of the 50S ribosomal subunit. Forms a multimeric L10(L12)X complex, where L10 forms an elongated spine to which 2 to 4 L12 dimers bind in a sequential fashion. Binds GTP-bound translation factors.

Its function is as follows. Forms part of the ribosomal stalk which helps the ribosome interact with GTP-bound translation factors. Is thus essential for accurate translation. The chain is Large ribosomal subunit protein bL12 from Caulobacter vibrioides (strain ATCC 19089 / CIP 103742 / CB 15) (Caulobacter crescentus).